The following is a 481-amino-acid chain: MTQYTLKQAGSLLQSKQISAVELASAYLAAIAEKNPALNGYITIDQDKTLAEARAADERIAQGNASALTGVPVAYKDIFCQTGWRSACASKMLDNFVSPYTATVVQNLLDEGMVTLGRTNMDEFAMGSTNENSFYGAAKNPWNPEHVPGGSSGGSAAVVAARLAPAALGSDTGGSIRQPASHCGITGIKPTYGTVSRFGMVAYASSFDQAGPMAQTAEDCAILLNAMAGFDPKDSTSFEREKEDYTRDLDKPLKGVKIGLPKEYFSEGNSTDVQTALQNTIDLLKAQGAEPVEVSLPQTKLSIPAYYVLASAEAGTNLSRYDGVRYGHRAAQFGDLEEMYGKTRAEGFGSEVKRRIMIGTYVLSHGYYDAYYLKAQKLRRLVADDFQTAFARCDLILAPTAPSAAPKIGADTSPVETYLSDIYTIAVNLAGLPALTLPAGFSGGGLPVGVQLVGNYFAEAKILGAAHQIQLNSDWHGKRPE.

Active-site charge relay system residues include Lys-76 and Ser-151. Ser-175 serves as the catalytic Acyl-ester intermediate.

Belongs to the amidase family. GatA subfamily. Heterotrimer of A, B and C subunits.

The enzyme catalyses L-glutamyl-tRNA(Gln) + L-glutamine + ATP + H2O = L-glutaminyl-tRNA(Gln) + L-glutamate + ADP + phosphate + H(+). Its function is as follows. Allows the formation of correctly charged Gln-tRNA(Gln) through the transamidation of misacylated Glu-tRNA(Gln) in organisms which lack glutaminyl-tRNA synthetase. The reaction takes place in the presence of glutamine and ATP through an activated gamma-phospho-Glu-tRNA(Gln). This is Glutamyl-tRNA(Gln) amidotransferase subunit A from Neisseria gonorrhoeae (strain NCCP11945).